We begin with the raw amino-acid sequence, 77 residues long: SS18-like protein 2 (77 aa).

Residues 50–53 (YQHV) carry the SH2-binding motif.

This sequence belongs to the SS18 family.

The chain is SS18-like protein 2 (Ss18l2) from Mus musculus (Mouse).